A 176-amino-acid chain; its full sequence is DNA-directed RNA polymerase II subunit 7 (176 aa).

It belongs to the eukaryotic RPB7/RPC8 RNA polymerase subunit family. Component of the RNA polymerase II complex consisting of at least 12 subunits. Interacts with NRPB4.

It localises to the nucleus. DNA-dependent RNA polymerase catalyzes the transcription of DNA into RNA using the four ribonucleoside triphosphates as substrates. Component of RNA polymerase II which synthesizes mRNA precursors and many functional non-coding RNAs. Pol II is the central component of the basal RNA polymerase II transcription machinery. It is composed of mobile elements that move relative to each other. NRPB7 is part of a subcomplex with NRPB4 that binds to a pocket formed by NRPB1, NRPB2 and NRPB6 at the base of the clamp element. The NRBP4-NRPB7 subcomplex seems to lock the clamp via NRPB7 in the closed conformation thus preventing double-stranded DNA to enter the active site cleft. The NRPB4-NRPB7 subcomplex binds single-stranded DNA and RNA. The polypeptide is DNA-directed RNA polymerase II subunit 7 (NRPB7) (Arabidopsis thaliana (Mouse-ear cress)).